A 368-amino-acid chain; its full sequence is UPF0284 protein PCC8801_3324 (368 aa).

This sequence belongs to the UPF0284 family.

This Rippkaea orientalis (strain PCC 8801 / RF-1) (Cyanothece sp. (strain PCC 8801)) protein is UPF0284 protein PCC8801_3324.